The primary structure comprises 114 residues: Immunomodulatory protein FIP-Fve (114 aa).

The residue at position 1 (S1) is an N-acetylserine.

This sequence belongs to the fungal immunomodulatory protein (FIP) family. Homodimer.

Its function is as follows. Lectin with specificity for complex cell-surface carbohydrates. Possesses immunomodulatory activity, stimulates lymphocyte mitogenesis, suppresses systemic anaphylaxis reactions and edema, enhances transcription of IL-2, IFN-gamma and TNF-alpha and hemagglutinates red blood cells. The protein is Immunomodulatory protein FIP-Fve of Flammulina velutipes (Agaricus velutipes).